The chain runs to 591 residues: V-type ATP synthase alpha chain (591 aa).

Residue 233-240 (GPFGAGKT) coordinates ATP.

This sequence belongs to the ATPase alpha/beta chains family.

The catalysed reaction is ATP + H2O + 4 H(+)(in) = ADP + phosphate + 5 H(+)(out). Its function is as follows. Produces ATP from ADP in the presence of a proton gradient across the membrane. The V-type alpha chain is a catalytic subunit. The polypeptide is V-type ATP synthase alpha chain (Streptococcus pyogenes serotype M2 (strain MGAS10270)).